Reading from the N-terminus, the 667-residue chain is Transmembrane 9 superfamily member 1 (667 aa).

Residues 1–22 form the signal peptide; it reads MIYKMAHVQLLLLYFFVSTVKA. Residues 23 to 302 are Lumenal-facing; sequence FYLPGVAPTT…DKYLHVYDPS (280 aa). N-linked (GlcNAc...) asparagine glycosylation is found at N61 and N282. The helical transmembrane segment at 303–323 threads the bilayer; it reads IQWFSLINFSLVVVLLSSVVI. Topologically, residues 324-370 are cytoplasmic; sequence HSLLRALKSDFARYNELNLDDDFQEDSGWKLNHGDVFRSPSQSLTLS. A helical transmembrane segment spans residues 371–391; the sequence is ILVGSGVQLFLMVTCSIFFAA. Residues 392–405 lie on the Lumenal side of the membrane; sequence LGFLSPSSRGSLAT. A helical transmembrane segment spans residues 406-426; that stretch reads VMFILYALFGFVGSYTSMGIY. Over 427–442 the chain is Cytoplasmic; the sequence is KFFNGPYWKANLILTP. The helical transmembrane segment at 443–463 threads the bilayer; that stretch reads LLVPGAILLIIIALNFFLMFV. Residues 464 to 474 are Lumenal-facing; it reads HSSGVIPASTL. A helical membrane pass occupies residues 475–495; the sequence is FFMVFLWFLFSIPLSFAGSLI. Topologically, residues 496–527 are cytoplasmic; the sequence is ARKRCHWDEHPTKTNQIARQIPFQPWYLKTIP. Residues 528 to 548 form a helical membrane-spanning segment; it reads ATLIAGIFPFGSIAVELYFIY. The Lumenal portion of the chain corresponds to 549 to 560; the sequence is TSLWFNKIFYMF. The helical transmembrane segment at 561 to 581 threads the bilayer; sequence GFLFFSFLLLTLTSSLVTILI. Residues 582 to 596 lie on the Cytoplasmic side of the membrane; that stretch reads TYHSLCLENWKWQWR. Residues 597–617 traverse the membrane as a helical segment; that stretch reads GFIIGGAGCALYVFIHSILFT. Residues 618–635 lie on the Lumenal side of the membrane; the sequence is KFKLGGFTTIVLYVGYSS. A helical transmembrane segment spans residues 636–656; sequence VISLLCCLVTGSIGFISSMLF. Residues 657-667 are Cytoplasmic-facing; that stretch reads VRKIYSSIKVD.

It belongs to the nonaspanin (TM9SF) (TC 9.A.2) family.

The protein resides in the endosome membrane. The protein localises to the vacuole membrane. In terms of biological role, with TMN2 and TMN3, plays a critical role in the late stages of a nutrient-controlled pathway notably regulating FLO11 gene expression. Acts downstream of RAS2 and TOR. Essential for cell adhesion and filamentous growth. May play a role as effector of cellular copper homeostasis. The protein is Transmembrane 9 superfamily member 1 (EMP70) of Saccharomyces cerevisiae (strain ATCC 204508 / S288c) (Baker's yeast).